Reading from the N-terminus, the 340-residue chain is Phospho-N-acetylmuramoyl-pentapeptide-transferase (340 aa).

Helical transmembrane passes span methionine 3–isoleucine 23, glycine 53–phenylalanine 73, alanine 79–leucine 99, methionine 119–threonine 139, isoleucine 144–valine 164, isoleucine 176–phenylalanine 196, glutamate 200–phenylalanine 220, valine 227–alanine 247, valine 250–leucine 270, and valine 315–leucine 335.

Belongs to the glycosyltransferase 4 family. MraY subfamily. Requires Mg(2+) as cofactor.

The protein localises to the cell membrane. It catalyses the reaction UDP-N-acetyl-alpha-D-muramoyl-L-alanyl-gamma-D-glutamyl-L-lysyl-D-alanyl-D-alanine + di-trans,octa-cis-undecaprenyl phosphate = Mur2Ac(oyl-L-Ala-gamma-D-Glu-L-Lys-D-Ala-D-Ala)-di-trans,octa-cis-undecaprenyl diphosphate + UMP. The protein operates within cell wall biogenesis; peptidoglycan biosynthesis. In terms of biological role, catalyzes the initial step of the lipid cycle reactions in the biosynthesis of the cell wall peptidoglycan: transfers peptidoglycan precursor phospho-MurNAc-pentapeptide from UDP-MurNAc-pentapeptide onto the lipid carrier undecaprenyl phosphate, yielding undecaprenyl-pyrophosphoryl-MurNAc-pentapeptide, known as lipid I. The sequence is that of Phospho-N-acetylmuramoyl-pentapeptide-transferase from Streptococcus thermophilus (strain CNRZ 1066).